The chain runs to 402 residues: Type II NADH:quinone oxidoreductase (402 aa).

FAD is bound by residues 12 to 16, 39 to 40, and valine 83; these read GAGYA and NK. Glutamate 172 is a catalytic residue. FAD contacts are provided by residues aspartate 302, 319–320, and lysine 379; that span reads AQ.

This sequence belongs to the NADH dehydrogenase family. Requires FAD as cofactor.

Its subcellular location is the cell membrane. The catalysed reaction is a quinone + NADH + H(+) = a quinol + NAD(+). Functionally, alternative, nonproton pumping NADH:quinone oxidoreductase that delivers electrons to the respiratory chain by oxidation of NADH and reduction of quinones, and contributes to the regeneration of NAD(+). The protein is Type II NADH:quinone oxidoreductase of Staphylococcus aureus (strain MSSA476).